Here is a 543-residue protein sequence, read N- to C-terminus: NADH-ubiquinone oxidoreductase chain 4 (543 aa).

14 consecutive transmembrane segments (helical) span residues 5-25 (FLMFLFALLIIPIIGIFIIWS), 84-104 (VVAFIISILNLMVSLLVYILF), 129-149 (VDGISIYFVLLTTIIIPIALM), 161-181 (SYLIIMLLLETLLLAVFLVLD), 182-202 (ILLFYIFFESILPPLFILIGL), 213-233 (FYIFLYTLLGSLFLLLSILTM), 254-274 (IQIFLFCGIFIAFAVKTPTIF), 287-307 (PLGGSIVLAGIVLKLSLYGIF), 321-341 (YTYIIFVIGVITIIYASFSTL), 350-370 (IAYSSVSHAAVYLIGVFSNTI), 377-397 (ILLGLAHGFTSPALFFIVGGV), 416-436 (MAPLLSLLFFIFSLANCGVPL), 456-476 (LLGLLASSSIVFSAAYSIFLF), and 501-521 (FYALIFLGVLVVFLGIYPSII).

This sequence belongs to the complex I subunit 4 family.

The protein localises to the mitochondrion membrane. It carries out the reaction a ubiquinone + NADH + 5 H(+)(in) = a ubiquinol + NAD(+) + 4 H(+)(out). Functionally, core subunit of the mitochondrial membrane respiratory chain NADH dehydrogenase (Complex I) that is believed to belong to the minimal assembly required for catalysis. Complex I functions in the transfer of electrons from NADH to the respiratory chain. The immediate electron acceptor for the enzyme is believed to be ubiquinone. This is NADH-ubiquinone oxidoreductase chain 4 (ndh-4) from Neurospora crassa (strain ATCC 24698 / 74-OR23-1A / CBS 708.71 / DSM 1257 / FGSC 987).